Here is a 284-residue protein sequence, read N- to C-terminus: Acetyl-coenzyme A carboxylase carboxyl transferase subunit beta (284 aa).

Residues 25-284 form the CoA carboxyltransferase N-terminal domain; that stretch reads MWVKCPGCSA…ILGILYRPAA (260 aa). Zn(2+) is bound by residues C29, C32, C48, and C51. Residues 29–51 form a C4-type zinc finger; sequence CPGCSATLLAKDLDANLNVCPTC.

Belongs to the AccD/PCCB family. Acetyl-CoA carboxylase is a heterohexamer composed of biotin carboxyl carrier protein (AccB), biotin carboxylase (AccC) and two subunits each of ACCase subunit alpha (AccA) and ACCase subunit beta (AccD). It depends on Zn(2+) as a cofactor.

It localises to the cytoplasm. It catalyses the reaction N(6)-carboxybiotinyl-L-lysyl-[protein] + acetyl-CoA = N(6)-biotinyl-L-lysyl-[protein] + malonyl-CoA. It participates in lipid metabolism; malonyl-CoA biosynthesis; malonyl-CoA from acetyl-CoA: step 1/1. Component of the acetyl coenzyme A carboxylase (ACC) complex. Biotin carboxylase (BC) catalyzes the carboxylation of biotin on its carrier protein (BCCP) and then the CO(2) group is transferred by the transcarboxylase to acetyl-CoA to form malonyl-CoA. The chain is Acetyl-coenzyme A carboxylase carboxyl transferase subunit beta from Pelobacter propionicus (strain DSM 2379 / NBRC 103807 / OttBd1).